Here is a 1167-residue protein sequence, read N- to C-terminus: Melanoma receptor tyrosine-protein kinase (1167 aa).

The signal sequence occupies residues M1–T25. Residues D26–S642 are Extracellular-facing. N-linked (GlcNAc...) asparagine glycosylation is found at N114, N144, and N201. Cystine bridges form between C195–C204, C199–C212, C220–C228, C224–C236, C237–C245, C241–C253, C256–C265, C269–C296, C300–C311, C315–C330, and C333–C337. Residues N356, N365, N398, N417, and N501 are each glycosylated (N-linked (GlcNAc...) asparagine). 9 disulfide bridges follow: C504-C513, C508-C521, C524-C533, C537-C553, C556-C569, C560-C577, C593-C615, C618-C626, and C622-C634. N-linked (GlcNAc...) asparagine glycosylation occurs at N576. N621 is a glycosylation site (N-linked (GlcNAc...) asparagine). The chain crosses the membrane as a helical span at residues S643–L665. The Cytoplasmic segment spans residues L666–R1167. In terms of domain architecture, Protein kinase spans F710 to L977. Residues L716 to V724 and K743 each bind ATP. D835 acts as the Proton acceptor in catalysis.

Belongs to the protein kinase superfamily. Tyr protein kinase family. EGF receptor subfamily.

It is found in the membrane. It catalyses the reaction L-tyrosyl-[protein] + ATP = O-phospho-L-tyrosyl-[protein] + ADP + H(+). In terms of biological role, probable receptor with tyrosine-protein kinase activity. The polypeptide is Melanoma receptor tyrosine-protein kinase (xmrk) (Xiphophorus maculatus (Southern platyfish)).